The sequence spans 722 residues: Solute carrier organic anion transporter family member 4C1 (722 aa).

Residues 1-81 (MQGSKGIENP…PGSQLSELEE (81 aa)) are disordered. The Cytoplasmic segment spans residues 1–101 (MQGSKGIENP…QCLQRCNTPQ (101 aa)). Phosphoserine occurs at positions 15 and 16. Phosphothreonine is present on Thr19. A phosphoserine mark is found at Ser24, Ser26, and Ser28. A compositionally biased stretch (polar residues) spans 25–46 (ASPSQVEVSAVASRNQNGGSQP). The helical transmembrane segment at 102-122 (GFLLHYCLLALTQGIVVNGLV) threads the bilayer. Residues 123 to 141 (NISISTIEKRYEMKSSLTG) are Extracellular-facing. Residues 142–162 (LISSSYDISFCVLSLFVSFFG) form a helical membrane-spanning segment. The Cytoplasmic segment spans residues 163–168 (ERGHKP). The helical transmembrane segment at 169–193 (RWLAFASFMIGLGALVFSLPHFFSG) threads the bilayer. Topologically, residues 194 to 218 (RYELGSIFEDTCLTRNSTRCSSSTS) are extracellular. A helical membrane pass occupies residues 219–249 (LLSNYFYVFVLGQLLLGTGGTPLYTLGTAFI). The Cytoplasmic segment spans residues 250 to 269 (DDSVPTHKSSLYIGIGYSMS). The helical transmembrane segment at 270-290 (ILGPAIGYVLGGQLLTMYIDI) threads the bilayer. The Extracellular portion of the chain corresponds to 291 to 306 (AMGQSSDLTEDDPRWL). A helical membrane pass occupies residues 307 to 331 (GAWWIGFLLAWLFAWSLIMPFSCFP). Topologically, residues 332–376 (KHLPGTAKIQAGKTSQTHQNNSTSFQHTDENFGKSIKDFPTAVKN) are cytoplasmic. Residues 377 to 398 (LMRNTVFICLVLSTTSEALITT) traverse the membrane as a helical segment. The Extracellular portion of the chain corresponds to 399–418 (GFATFLPKFIENQFGLTSSF). A helical membrane pass occupies residues 419-442 (AATLGGAVLIPGAALGQILGGVLV). The Cytoplasmic segment spans residues 443–446 (SKFK). The chain crosses the membrane as a helical span at residues 447-470 (MKCKNTMKFALCTSGVALVLSFVF). Residues 471 to 578 (IYAKCENEPF…RTRCSNLPIF (108 aa)) lie on the Extracellular side of the membrane. The Kazal-like domain occupies 494-549 (GNLTAPCNANCNCLRSYYYPLCGSDGIQYFSPCFAGCLNSVSNRKPKVYYNCSCIE). 3 cysteine pairs are disulfide-bonded: Cys500–Cys530, Cys506–Cys526, and Cys515–Cys547. Residues 579–601 (LGIFFITVIFTFMAGTPITVSIL) traverse the membrane as a helical segment. Residues 602 to 610 (RCVNHRHRS) lie on the Cytoplasmic side of the membrane. The helical transmembrane segment at 611 to 636 (LALGVQFMLLRLLGTIPGPIIFGVII) threads the bilayer. The Extracellular segment spans residues 637-670 (DSTCVLWDVNECGIKGACWIYDNIKMAHMLVAIS). A helical membrane pass occupies residues 671 to 688 (VTCKVITIFFNGLAIVLY). The Cytoplasmic portion of the chain corresponds to 689–722 (KPPPPGTEVSFQSQNVIVSTISVEEDLDKAENEG).

It belongs to the organo anion transporter (TC 2.A.60) family. As to expression, strongly expressed in initial segment of epididymis and seminal vesicles.

It localises to the basolateral cell membrane. It carries out the reaction estrone 3-sulfate(out) = estrone 3-sulfate(in). The catalysed reaction is L-thyroxine(out) = L-thyroxine(in). It catalyses the reaction 3,3',5-triiodo-L-thyronine(out) = 3,3',5-triiodo-L-thyronine(in). The enzyme catalyses chenodeoxycholate(out) = chenodeoxycholate(in). It carries out the reaction glycocholate(out) = glycocholate(in). The catalysed reaction is L-homoarginine(in) = L-homoarginine(out). It catalyses the reaction L-arginine(in) = L-arginine(out). The enzyme catalyses N(omega),N(omega)-dimethyl-L-arginine(out) = N(omega),N(omega)-dimethyl-L-arginine(in). In terms of biological role, mediates the transport of organic anions such as steroids (estrone 3-sulfate, chenodeoxycholate, glycocholate) and thyroid hormones (3,3',5-triiodo-L-thyronine (T3), L-thyroxine (T4)), in the kidney. Capable of transporting cAMP and pharmacological substances such as digoxin, ouabain and methotrexate. Transport is independent of sodium, chloride ion, and ATP. Transport activity is stimulated by an acidic extracellular environment due to increased substrate affinity to the transporter. The driving force for this transport activity is currently not known. The role of hydrogencarbonate (HCO3(-), bicarbonate) as the probable counteranion that exchanges for organic anions is still not well defined. Functions as an uptake transporter at the apical membrane, suggesting a role in renal reabsorption. Involved in the renal secretion of the uremic toxin ADMA (N(omega),N(omega)-dimethyl-L-arginine or asymmetrical dimethylarginine), which is associated to cardiovascular events and mortality, and the structurally related amino acids L-arginine and L-homoarginine (a cardioprotective biomarker). Can act bidirectionally, suggesting a dual protective role of this transport protein; exporting L-homoarginine after being synthesized in proximal tubule cells, and mediating uptake of ADMA from the blood into proximal tubule cells where it is degraded by the enzyme dimethylarginine dimethylaminohydrolase 1 (DDAH1). May be involved in sperm maturation by enabling directed movement of organic anions and compounds within or between cells. This ion-transporting process is important to maintain the strict epididymal homeostasis necessary for sperm maturation. May have a role in secretory functions since seminal vesicle epithelial cells are assumed to secrete proteins involved in decapacitation by modifying surface proteins to facilitate the acquisition of the ability to fertilize the egg. This Mus musculus (Mouse) protein is Solute carrier organic anion transporter family member 4C1.